The primary structure comprises 1294 residues: Voltage-gated inwardly rectifying potassium channel KCNH2 (1294 aa).

Over 1 to 377 the chain is Cytoplasmic; sequence RKFIIANARV…RIHRWTILHY (377 aa). The 30-residue stretch at 15-44 folds into the PAS domain; sequence VIYCNDGFCELCGYSRAEVMQRPCTCDFLH. The 53-residue stretch at 66–118 folds into the PAC domain; it reads RKVEIAFYRKDGSCFLCLVDVVPVKNEDGAVIMFILNFEVVMEKDMVGSPARD. The disordered stretch occupies residues 207–258; sequence LVAPGSPPSSVPGPPHTSPRAHSLNPDASGSSCSLARTRSRESCASVRRASS. Residues 211-223 are compositionally biased toward pro residues; that stretch reads GSPPSSVPGPPHT. Residues S212 and S216 each carry the phosphoserine modification. Positions 232–243 are enriched in polar residues; sequence PDASGSSCSLAR. S257, S258, S294, and S325 each carry phosphoserine. Residues 378–398 traverse the membrane as a helical segment; sequence SPFKAVWDWLILLLVIYTAVF. Residues 399-424 lie on the Extracellular side of the membrane; the sequence is TPYSAAFLLKEPEEDAQTADCGYACQ. Residues 425 to 445 form a helical membrane-spanning segment; the sequence is PLAVVDLIVDIMFIVDILINF. The Cytoplasmic segment spans residues 446-469; that stretch reads RTTYVNANEEVVSHPGRIAVHYFK. A helical membrane pass occupies residues 470 to 490; the sequence is GWFLIDMVAAIPFDLLIFGSG. The Extracellular portion of the chain corresponds to 491–494; it reads SEEL. The helical; Voltage-sensor transmembrane segment at 495–515 threads the bilayer; it reads IGLLKTARLLRLVRVARKLDR. The Cytoplasmic segment spans residues 516-521; sequence YSEYGA. Residues 522 to 542 form a helical membrane-spanning segment; that stretch reads AVLFLLMCTFALIAHWLACIW. At 543-585 the chain is on the extracellular side; sequence YAIGNMEQPDMNSRIGWLHNLGDQIGKPYNSSGLGGPSIKDKY. The segment at residues 586 to 606 is an intramembrane region (pore-forming); it reads VTALYFTFSSLTSVGFGNVSP. Positions 598-603 match the Selectivity filter motif; it reads SVGFGN. Residues 607 to 612 are Extracellular-facing; that stretch reads NTNSEK. Residues 613–633 form a helical membrane-spanning segment; the sequence is IFSICVMLIGSLMYASIFGNV. Topologically, residues 634–1294 are cytoplasmic; that stretch reads SAIIQRLYSG…IAHWLACIWY (661 aa). The tract at residues 716 to 816 is cNMP-binding domain; sequence PFRGATKGCL…IHRDDLLEVL (101 aa). The tract at residues 844 to 956 is disordered; sequence GSPGSTELEG…LTEDGDKSDT (113 aa). A phosphoserine mark is found at S845 and S848. Residues 857–866 show a composition bias toward basic residues; it reads RQRRRKLSFR. The span at 902-913 shows a compositional bias: low complexity; it reads GDSPSSGPSSPE. Position 987 is an omega-N-methylarginine (R987). Positions 1008–1035 form a coiled coil; the sequence is RGDVESRLDALQRQLNRLETRLSADMAT. S1110 carries the phosphoserine modification.

It belongs to the potassium channel family. H (Eag) (TC 1.A.1.20) subfamily. Kv11.1/KCNH2 sub-subfamily. The potassium channel is probably composed of a homo- or heterotetrameric complex of pore-forming alpha subunits that can associate with modulating beta subunits. Interacts with DNAJB12 and DNAJB14; chaperones DNAJB12 and DNAJB14 promote tetramerization. Heteromultimer with KCNH6/ERG2 and KCNH7/ERG3. Interacts with ALG10B. Forms a stable complex with KCNE1 or KCNE2, and that this heteromultimerization regulates Inward rectifier potassium channel activity. Interacts with CANX. The core-glycosylated, but not the fully glycosylated form interacts with RNF207. Interacts with NDFIP1 and NDFIP2; this interaction decreases the cell membrane expression by targeting KCNH2, through interaction with NEDD4L, for the degradation through the multivesicular bodies (MVBs)-lysosomal pathway. In terms of processing, phosphorylated on serine and threonine residues. Phosphorylation by PKA inhibits ion conduction. As to expression, highly expressed in heart and brain.

The protein resides in the cell membrane. It carries out the reaction K(+)(in) = K(+)(out). Functionally, pore-forming (alpha) subunit of voltage-gated inwardly rectifying potassium channel. Characterized by unusual gating kinetics by producing relatively small outward currents during membrane depolarization and large inward currents during subsequent repolarization which reflect a rapid inactivation during depolarization and quick recovery from inactivation but slow deactivation (closing) during repolarization. Channel properties are modulated by cAMP and subunit assembly. Forms a stable complex with KCNE1 or KCNE2, and that this heteromultimerization regulates inward rectifier potassium channel activity. The polypeptide is Voltage-gated inwardly rectifying potassium channel KCNH2 (Cavia porcellus (Guinea pig)).